Here is a 201-residue protein sequence, read N- to C-terminus: MKAIILAGGESSRFGKAKAFAKIDNQYFYQKIIETLKSTNMFNRIIISTNSQLASQFEYEYVIIDDEHHQNKGPLTGIYSVMKQYMDEELFFIVSVDTPMITSKAVNGLYHFMVSNLIESRLDIVAFKEGEICIPTIGFYTLSTFPFIEKALNSNHLSLKHVFKQLSTDWLDVTEIDSPYYWYKNINFQHDLDSLKMQINE.

GTP-binding positions include 6 to 8 (LAG), K18, D65, and D97. Residue D97 participates in Mg(2+) binding.

This sequence belongs to the MobA family. Mg(2+) is required as a cofactor.

The protein resides in the cytoplasm. It catalyses the reaction Mo-molybdopterin + GTP + H(+) = Mo-molybdopterin guanine dinucleotide + diphosphate. Its function is as follows. Transfers a GMP moiety from GTP to Mo-molybdopterin (Mo-MPT) cofactor (Moco or molybdenum cofactor) to form Mo-molybdopterin guanine dinucleotide (Mo-MGD) cofactor. The polypeptide is Probable molybdenum cofactor guanylyltransferase (Staphylococcus epidermidis (strain ATCC 35984 / DSM 28319 / BCRC 17069 / CCUG 31568 / BM 3577 / RP62A)).